Here is a 288-residue protein sequence, read N- to C-terminus: Formamidopyrimidine-DNA glycosylase (288 aa).

P2 (schiff-base intermediate with DNA) is an active-site residue. E3 functions as the Proton donor in the catalytic mechanism. K58 acts as the Proton donor; for beta-elimination activity in catalysis. Residues H101, R124, and R169 each contribute to the DNA site. Residues 254–288 (LVYDRAGLPCRVCGTPIRQIVQGQRSTFYCPACQR) form an FPG-type zinc finger. Residue R278 is the Proton donor; for delta-elimination activity of the active site.

It belongs to the FPG family. Monomer. Requires Zn(2+) as cofactor.

The catalysed reaction is Hydrolysis of DNA containing ring-opened 7-methylguanine residues, releasing 2,6-diamino-4-hydroxy-5-(N-methyl)formamidopyrimidine.. It catalyses the reaction 2'-deoxyribonucleotide-(2'-deoxyribose 5'-phosphate)-2'-deoxyribonucleotide-DNA = a 3'-end 2'-deoxyribonucleotide-(2,3-dehydro-2,3-deoxyribose 5'-phosphate)-DNA + a 5'-end 5'-phospho-2'-deoxyribonucleoside-DNA + H(+). Functionally, involved in base excision repair of DNA damaged by oxidation or by mutagenic agents. Acts as a DNA glycosylase that recognizes and removes damaged bases. Has a preference for oxidized purines, such as 7,8-dihydro-8-oxoguanine (8-oxoG). Has AP (apurinic/apyrimidinic) lyase activity and introduces nicks in the DNA strand. Cleaves the DNA backbone by beta-delta elimination to generate a single-strand break at the site of the removed base with both 3'- and 5'-phosphates. The protein is Formamidopyrimidine-DNA glycosylase of Ralstonia nicotianae (strain ATCC BAA-1114 / GMI1000) (Ralstonia solanacearum).